A 160-amino-acid polypeptide reads, in one-letter code: Non-secretory ribonuclease (160 aa).

Positions 1-27 (MVPKLFTSPICLLLLLGLMGVEGSLHA) are cleaved as a signal peptide. Trp34 carries C-linked (Man) tryptophan glycosylation. His42 (proton acceptor) is an active-site residue. An N-linked (GlcNAc...) asparagine glycan is attached at Asn44. Cystine bridges form between Cys50–Cys110, Cys64–Cys122, Cys82–Cys137, and Cys89–Cys98. Tyr60 carries the 3'-nitrotyrosine modification. 65-69 (KNQNT) is a substrate binding site. N-linked (GlcNAc...) asparagine glycans are attached at residues Asn92, Asn111, Asn118, and Asn138. His155 functions as the Proton donor in the catalytic mechanism.

The protein belongs to the pancreatic ribonuclease family. As to quaternary structure, interacts with and forms a tight 1:1 complex with RNH1. Dimerization of two such complexes may occur.

The protein localises to the lysosome. It localises to the cytoplasmic granule. The enzyme catalyses an [RNA] containing cytidine + H2O = an [RNA]-3'-cytidine-3'-phosphate + a 5'-hydroxy-ribonucleotide-3'-[RNA].. It catalyses the reaction an [RNA] containing uridine + H2O = an [RNA]-3'-uridine-3'-phosphate + a 5'-hydroxy-ribonucleotide-3'-[RNA].. Functionally, this is a non-secretory ribonuclease. It is a pyrimidine specific nuclease with a slight preference for U. Cytotoxin and helminthotoxin. Possesses a wide variety of biological activities. The sequence is that of Non-secretory ribonuclease (RNASE2) from Chlorocebus aethiops (Green monkey).